Here is a 589-residue protein sequence, read N- to C-terminus: Nicotinate phosphoribosyltransferase (589 aa).

Positions 1–30 are disordered; that stretch reads MSQSNTPLKRKKTENGYSENGSTTGATSNQ. The span at 15–30 shows a compositional bias: polar residues; it reads NGYSENGSTTGATSNQ. Nicotinate-binding residues include Y68 and T256. H259 carries the phosphohistidine modification. Residue R356 coordinates nicotinate. Residue T418 coordinates 5-phospho-alpha-D-ribose 1-diphosphate.

The protein belongs to the NAPRTase family. The cofactor is Mg(2+). Mn(2+) is required as a cofactor. In terms of processing, transiently phosphorylated on a His residue during the reaction cycle. Phosphorylation strongly increases the affinity for substrates and increases the rate of nicotinate D-ribonucleotide production. Dephosphorylation regenerates the low-affinity form of the enzyme, leading to product release.

The enzyme catalyses nicotinate + 5-phospho-alpha-D-ribose 1-diphosphate + ATP + H2O = nicotinate beta-D-ribonucleotide + ADP + phosphate + diphosphate. The protein operates within cofactor biosynthesis; NAD(+) biosynthesis; nicotinate D-ribonucleotide from nicotinate: step 1/1. Functionally, catalyzes the first step in the biosynthesis of NAD from nicotinic acid, the ATP-dependent synthesis of beta-nicotinate D-ribonucleotide from nicotinate and 5-phospho-D-ribose 1-phosphate. Helps prevent cellular oxidative stress via its role in NAD biosynthesis. This Dictyostelium discoideum (Social amoeba) protein is Nicotinate phosphoribosyltransferase (naprt).